Reading from the N-terminus, the 894-residue chain is Glutamate receptor 3 (894 aa).

The signal sequence occupies residues 1 to 28; that stretch reads MARQKKMGQNVLRAVFFLVLGLLGHSHG. At 29 to 552 the chain is on the extracellular side; the sequence is GFPNTISIGG…GVFSFLDPLA (524 aa). Residues asparagine 63, asparagine 266, asparagine 380, asparagine 415, and asparagine 422 are each glycosylated (N-linked (GlcNAc...) asparagine). An intrachain disulfide couples cysteine 91 to cysteine 340. Proline 508, threonine 510, and arginine 515 together coordinate L-glutamate. Residues 553–573 form a helical membrane-spanning segment; it reads YEIWMCIVFASIGVSVVLFLV. Residues 574–602 lie on the Cytoplasmic side of the membrane; the sequence is SRFSPYEWHLEDNNEEPRDPQSPPDPPNE. The segment at residues 603–618 is an intramembrane region (helical; Pore-forming); it reads FGIFNSLWFSLGAFMQ. An intramembrane segment occupies 619–621; that stretch reads QGC. The S-palmitoyl cysteine moiety is linked to residue cysteine 621. Topologically, residues 622-627 are cytoplasmic; it reads DISPRS. Residues 628 to 648 form a helical membrane-spanning segment; it reads LSGRIVGGVWWFFTLIIISSY. The Extracellular portion of the chain corresponds to 649-823; sequence TANLAAFLTV…DKTSALSLSN (175 aa). Serine 686, threonine 687, and glutamate 737 together coordinate L-glutamate. The cysteines at positions 750 and 805 are disulfide-linked. A helical membrane pass occupies residues 824–844; sequence VAGVFYILVGGLGLAMMVALI. Residues 845-894 are Cytoplasmic-facing; sequence EFCYKSRAESKRMKLTKNTQNFKPAPATNTQNYATYREGYNVYGTESVKI. Cysteine 847 is lipidated: S-palmitoyl cysteine. Tyrosine 877 and tyrosine 887 each carry phosphotyrosine.

Belongs to the glutamate-gated ion channel (TC 1.A.10.1) family. GRIA3 subfamily. As to quaternary structure, homotetramer or heterotetramer of pore-forming glutamate receptor subunits. Tetramers may be formed by the dimerization of dimers. Interacts with PICK1, GRIP1 and GRIP2. Found in a complex with GRIA1, GRIA2, GRIA4, CNIH2, CNIH3, CACNG2, CACNG3, CACNG4, CACNG5, CACNG7 and CACNG8. Interacts with CACNG5. Found in a complex with GRIA1, GRIA2, GRIA4, DLG4, CACNG8 and CNIH2.

Its subcellular location is the cell membrane. It is found in the postsynaptic cell membrane. It localises to the postsynaptic density membrane. The enzyme catalyses Ca(2+)(in) = Ca(2+)(out). In terms of biological role, ionotropic glutamate receptor that functions as a ligand-gated cation channel, gated by L-glutamate and glutamatergic agonists such as alpha-amino-3-hydroxy-5-methyl-4-isoxazolepropionic acid (AMPA), quisqualic acid, and kainic acid. L-glutamate acts as an excitatory neurotransmitter at many synapses in the central nervous system and plays an important role in fast excitatory synaptic transmission by inducing long-term potentiation. Binding of the excitatory neurotransmitter L-glutamate induces a conformation change, leading to the opening of the cation channel, and thereby converts the chemical signal to an electrical impulse upon entry of calcium. The receptor then desensitizes rapidly and enters a transient inactive state, characterized by the presence of bound agonist. In the presence of CACNG8, shows resensitization which is characterized by a delayed accumulation of current flux upon continued application of glutamate. This chain is Glutamate receptor 3, found in Macaca fascicularis (Crab-eating macaque).